Here is a 104-residue protein sequence, read N- to C-terminus: Large ribosomal subunit protein bL21 (104 aa).

This sequence belongs to the bacterial ribosomal protein bL21 family. As to quaternary structure, part of the 50S ribosomal subunit. Contacts protein L20.

Functionally, this protein binds to 23S rRNA in the presence of protein L20. The sequence is that of Large ribosomal subunit protein bL21 from Clostridium botulinum (strain ATCC 19397 / Type A).